A 495-amino-acid chain; its full sequence is B3 domain-containing protein Os01g0234100 (495 aa).

Disordered regions lie at residues 1–25 (MAIDQPIKKRGRPPGSKNTKNKMEQ) and 88–108 (PGIPQTCNTQNTSNGRTNTTE). A compositionally biased stretch (polar residues) spans 92–108 (QTCNTQNTSNGRTNTTE). The TF-B3 DNA-binding region spans 152–243 (FVKHMLHSHV…KFKVHIIRDK (92 aa)). Over residues 268 to 282 (EATDNATKPKEDPET) the composition is skewed to basic and acidic residues. Residues 268 to 289 (EATDNATKPKEDPETTRVSSKV) are disordered.

It is found in the nucleus. The polypeptide is B3 domain-containing protein Os01g0234100 (Oryza sativa subsp. japonica (Rice)).